A 385-amino-acid chain; its full sequence is Succinate--CoA ligase [ADP-forming] subunit beta (385 aa).

The ATP-grasp domain occupies 9-244 (KEVLRKYGVS…LDEEDPKEIE (236 aa)). ATP-binding positions include K46, 53–55 (GRG), E99, C102, and E107. The Mg(2+) site is built by N199 and D213. Phosphoserine is present on S220. Residues N264 and 321 to 323 (GIM) contribute to the substrate site.

This sequence belongs to the succinate/malate CoA ligase beta subunit family. In terms of assembly, heterotetramer of two alpha and two beta subunits. Interacts with BrxC. The cofactor is Mg(2+).

It carries out the reaction succinate + ATP + CoA = succinyl-CoA + ADP + phosphate. The catalysed reaction is GTP + succinate + CoA = succinyl-CoA + GDP + phosphate. It participates in carbohydrate metabolism; tricarboxylic acid cycle; succinate from succinyl-CoA (ligase route): step 1/1. Its function is as follows. Succinyl-CoA synthetase functions in the citric acid cycle (TCA), coupling the hydrolysis of succinyl-CoA to the synthesis of either ATP or GTP and thus represents the only step of substrate-level phosphorylation in the TCA. The beta subunit provides nucleotide specificity of the enzyme and binds the substrate succinate, while the binding sites for coenzyme A and phosphate are found in the alpha subunit. The protein is Succinate--CoA ligase [ADP-forming] subunit beta of Bacillus subtilis (strain 168).